A 351-amino-acid polypeptide reads, in one-letter code: Soluble interferon alpha/beta receptor OPG204 (351 aa).

An N-terminal signal peptide occupies residues 1–23 (MKMKMMVRIYFVSLSLLLFHSYA). 2 Ig-like C2-type domains span residues 65 to 137 (LGEP…KNGD) and 155 to 237 (PKTY…IVVS). 2 disulfide bridges follow: C73-C129 and C172-C221. Residues N117, N182, N261, N269, and N321 are each glycosylated (N-linked (GlcNAc...) asparagine; by host). Positions 246–345 (PSQDHRFKLI…HNYYFDKTLT (100 aa)) constitute an Ig-like V-type domain. A disulfide bridge connects residues C272 and C333.

It belongs to the interleukin-1 receptor family. As to quaternary structure, interacts with host IFNA1.

It localises to the secreted. Counteracts the antiviral effects of host IFN-alpha/beta and key IFN-inducible proteins involved in viral RNA degradation suxh as host OAS1. Acts as a soluble IFN-alpha receptor and thus inhibits the interaction between host IFN-alpha and its receptor. This chain is Soluble interferon alpha/beta receptor OPG204 (OPG204), found in Cynomys gunnisoni (Gunnison's prairie dog).